The chain runs to 487 residues: Serine/threonine-protein kinase 4 (487 aa).

Met1 is subject to N-acetylmethionine. Position 3 is a phosphothreonine (Thr3). The 252-residue stretch at 30–281 (FDVLEKLGEG…ATQLLQHPFV (252 aa)) folds into the Protein kinase domain. ATP-binding positions include 36 to 44 (LGEGSYGSV) and Lys59. The active-site Proton acceptor is the Asp149. Thr183 bears the Phosphothreonine; by autocatalysis mark. Position 265 is a phosphoserine (Ser265). Residues 290–310 (LRDLINEAMDVKLKRQESQQR) adopt a coiled-coil conformation. Residues 303–312 (KRQESQQREV) show a composition bias toward basic and acidic residues. The tract at residues 303–332 (KRQESQQREVDQDDEENSEEDEMDSGTMVR) is disordered. The segment covering 313–326 (DQDDEENSEEDEMD) has biased composition (acidic residues). The residue at position 320 (Ser320) is a Phosphoserine. Phosphothreonine is present on residues Thr340 and Thr367. The residue at position 387 (Thr387) is a Phosphothreonine; by PKB/AKT1. 2 positions are modified to phosphoserine: Ser410 and Ser414. Tyr433 carries the phosphotyrosine modification. Positions 433-480 (YEFLKSWTVEDLQKRLLALDPMMEQEIEEIRQKYQSKRQPILDAIEAK) constitute an SARAH domain.

This sequence belongs to the protein kinase superfamily. STE Ser/Thr protein kinase family. STE20 subfamily. As to quaternary structure, homodimer; mediated via the coiled-coil region. Interacts with NORE1, which inhibits autoactivation. Interacts with and stabilizes SAV1. Interacts with RASSF1. Interacts with FOXO3. Interacts with RASSF2 (via SARAH domain). Interacts with AR, PKB/AKT1, TNNI3 and SIRT1. Interacts with DLG5 (via PDZ domain 3). Interacts with MARK3 and SCRIB in the presence of DLG5. It depends on Mg(2+) as a cofactor. In terms of processing, autophosphorylated on serine and threonine residues. Phosphorylation at Thr-387 by PKB/AKT1, leads to inhibition of its: kinase activity, nuclear translocation and autophosphorylation at Thr-183. It also diminishes its cleavage by caspases and its ability to phosphorylate FOXO3. Proteolytically cleaved by caspase-3 during apoptosis at Asp-326 and Asp-349 resulting in a 37 kDa or a 39 kDa subunit respectively. The 39 kDa subunit is further cleaved into the 37 kDa form. Proteolytic cleavage results in kinase activation and nuclear translocation of the truncated form (MST1/N). It is less likely that cleavage at Asp-349 is a prerequisite for activation as this site is not conserved in the murine ortholog.

Its subcellular location is the cytoplasm. It is found in the nucleus. The enzyme catalyses L-seryl-[protein] + ATP = O-phospho-L-seryl-[protein] + ADP + H(+). The catalysed reaction is L-threonyl-[protein] + ATP = O-phospho-L-threonyl-[protein] + ADP + H(+). Its activity is regulated as follows. Inhibited by the C-terminal non-catalytic region. Activated by caspase-cleavage. Full activation also requires homodimerization and autophosphorylation of Thr-183. Activated by RASSF1 which acts by preventing its dephosphorylation. Functionally, stress-activated, pro-apoptotic kinase which, following caspase-cleavage, enters the nucleus and induces chromatin condensation followed by internucleosomal DNA fragmentation. Key component of the Hippo signaling pathway which plays a pivotal role in organ size control and tumor suppression by restricting proliferation and promoting apoptosis. The core of this pathway is composed of a kinase cascade wherein STK3/MST2 and STK4/MST1, in complex with its regulatory protein SAV1, phosphorylates and activates LATS1/2 in complex with its regulatory protein MOB1, which in turn phosphorylates and inactivates YAP1 oncoprotein and WWTR1/TAZ. Phosphorylation of YAP1 by LATS2 inhibits its translocation into the nucleus to regulate cellular genes important for cell proliferation, cell death, and cell migration. STK3/MST2 and STK4/MST1 are required to repress proliferation of mature hepatocytes, to prevent activation of facultative adult liver stem cells (oval cells), and to inhibit tumor formation. Phosphorylates 'Ser-14' of histone H2B (H2BS14ph) during apoptosis. Phosphorylates FOXO3 upon oxidative stress, which results in its nuclear translocation and cell death initiation. Phosphorylates MOBKL1A, MOBKL1B and RASSF2. Phosphorylates TNNI3 (cardiac Tn-I) and alters its binding affinity to TNNC1 (cardiac Tn-C) and TNNT2 (cardiac Tn-T). Phosphorylates FOXO1 on 'Ser-212' and regulates its activation and stimulates transcription of PMAIP1 in a FOXO1-dependent manner. Phosphorylates SIRT1 and inhibits SIRT1-mediated p53/TP53 deacetylation, thereby promoting p53/TP53 dependent transcription and apoptosis upon DNA damage. Acts as an inhibitor of PKB/AKT1. Phosphorylates AR on 'Ser-650' and suppresses its activity by intersecting with PKB/AKT1 signaling and antagonizing formation of AR-chromatin complexes. This Chlorocebus aethiops (Green monkey) protein is Serine/threonine-protein kinase 4 (STK4).